The following is a 523-amino-acid chain: Succinate-semialdehyde dehydrogenase, mitochondrial (523 aa).

The N-terminal 35 residues, 1–35, are a transit peptide targeting the mitochondrion; that stretch reads MATCFLLRSFWAARPALPPPGRFRPEPAGTPRRSY. N6-acetyllysine is present on Lys74. An N6-acetyllysine; alternate modification is found at Lys114. Lys114 is modified (N6-succinyllysine; alternate). Lys123 bears the N6-succinyllysine mark. An N6-acetyllysine modification is found at Lys128. An N6-succinyllysine modification is found at Lys172. NAD(+) is bound by residues Arg201 and 216 to 219; that span reads KPAE. Arg201 is a binding site for substrate. Lys253 carries the post-translational modification N6-acetyllysine; alternate. Lys253 bears the N6-succinyllysine; alternate mark. Residue 272–277 coordinates NAD(+); the sequence is GSTATG. Glu294 acts as the Proton acceptor in catalysis. Position 322 (Arg322) interacts with substrate. Cys328 acts as the Nucleophile in catalysis. Cys328 and Cys330 are joined by a disulfide. N6-acetyllysine; alternate is present on Lys347. Lys347 carries the post-translational modification N6-succinyllysine; alternate. At Lys353 the chain carries N6-acetyllysine. The residue at position 390 (Lys390) is an N6-succinyllysine. Lys399 is subject to N6-acetyllysine. The residue at position 403 (Ser403) is a Phosphoserine. Position 486 (Ser486) interacts with substrate. Ser487 is modified (phosphoserine).

The protein belongs to the aldehyde dehydrogenase family. In terms of assembly, homotetramer.

It localises to the mitochondrion. It catalyses the reaction succinate semialdehyde + NAD(+) + H2O = succinate + NADH + 2 H(+). Its pathway is amino-acid degradation; 4-aminobutanoate degradation. Its activity is regulated as follows. Redox-regulated. Inhibited under oxydizing conditions. Catalyzes one step in the degradation of the inhibitory neurotransmitter gamma-aminobutyric acid (GABA). The polypeptide is Succinate-semialdehyde dehydrogenase, mitochondrial (Aldh5a1) (Mus musculus (Mouse)).